A 137-amino-acid polypeptide reads, in one-letter code: Bombinin-like peptides 2 (137 aa).

Residues 1-18 (MNFKYIVAVSILIASAYA) form the signal peptide. Asn-70 is subject to Asparagine amide. Residues 92–112 (DSLEHPEEASEKETRGFNQEE) form a disordered region. Ile-136 carries the isoleucine amide modification.

The protein belongs to the bombinin family. Expressed by the skin glands.

The protein resides in the secreted. Its function is as follows. Bombinin-like peptide 2 has antimicrobial activity, but no hemolytic activity. Preliminary evidence indicates that this peptide does not lyse and thus kill the bacteria by its antimicrobial activity. Bombinin H2 has antibacterial and hemolytic activity. The polypeptide is Bombinin-like peptides 2 (Bombina variegata (Yellow-bellied toad)).